The sequence spans 486 residues: Chromosomal replication initiator protein DnaA (486 aa).

The interval 1–79 (MEKSKNIWSL…GYNNIVIVFT (79 aa)) is domain I, interacts with DnaA modulators. A domain II region spans residues 79-141 (TNQPPKTHSN…EEEPTNFKNP (63 aa)). A domain III, AAA+ region region spans residues 142–358 (FLKKRYTFEN…AAVTKLKAYI (217 aa)). Gly-186, Gly-188, Lys-189, and Thr-190 together coordinate ATP. A domain IV, binds dsDNA region spans residues 359 to 486 (DLDNIEIDIE…TELMNKIKKN (128 aa)).

The protein belongs to the DnaA family. In terms of assembly, oligomerizes as a right-handed, spiral filament on DNA at oriC.

Its subcellular location is the cytoplasm. Functionally, plays an essential role in the initiation and regulation of chromosomal replication. ATP-DnaA binds to the origin of replication (oriC) to initiate formation of the DNA replication initiation complex once per cell cycle. Binds the DnaA box (a 9 base pair repeat at the origin) and separates the double-stranded (ds)DNA. Forms a right-handed helical filament on oriC DNA; dsDNA binds to the exterior of the filament while single-stranded (ss)DNA is stabiized in the filament's interior. The ATP-DnaA-oriC complex binds and stabilizes one strand of the AT-rich DNA unwinding element (DUE), permitting loading of DNA polymerase. After initiation quickly degrades to an ADP-DnaA complex that is not apt for DNA replication. Binds acidic phospholipids. Binds to the bpuR promoter, possibly at 5'-TTTTTAAA-3'. In Borreliella burgdorferi (strain ATCC 35210 / DSM 4680 / CIP 102532 / B31) (Borrelia burgdorferi), this protein is Chromosomal replication initiator protein DnaA.